Here is a 292-residue protein sequence, read N- to C-terminus: Aspartate carbamoyltransferase catalytic subunit (292 aa).

Carbamoyl phosphate contacts are provided by arginine 49 and threonine 50. Position 77 (lysine 77) interacts with L-aspartate. Positions 99, 127, and 130 each coordinate carbamoyl phosphate. Residues arginine 161 and arginine 211 each contribute to the L-aspartate site. Residues glycine 250 and proline 251 each contribute to the carbamoyl phosphate site.

The protein belongs to the aspartate/ornithine carbamoyltransferase superfamily. ATCase family. As to quaternary structure, heterododecamer (2C3:3R2) of six catalytic PyrB chains organized as two trimers (C3), and six regulatory PyrI chains organized as three dimers (R2).

It carries out the reaction carbamoyl phosphate + L-aspartate = N-carbamoyl-L-aspartate + phosphate + H(+). It functions in the pathway pyrimidine metabolism; UMP biosynthesis via de novo pathway; (S)-dihydroorotate from bicarbonate: step 2/3. Functionally, catalyzes the condensation of carbamoyl phosphate and aspartate to form carbamoyl aspartate and inorganic phosphate, the committed step in the de novo pyrimidine nucleotide biosynthesis pathway. This is Aspartate carbamoyltransferase catalytic subunit from Campylobacter lari (strain RM2100 / D67 / ATCC BAA-1060).